Consider the following 311-residue polypeptide: MVSTATQIGHFSFDNCLMNAAGVYCMTKEELIEVEKSQAASFVTKTGTLEVRPGNPEPRYADTRLGSINSMGLPNNGFRYYLDFVSDLAKTGQHKPHFLSVVGLSPTETETILKAIMASDYEGLVELNLSCPNVPGKPQIAYDFETTNQLLENLFTYYTKPLGIKLPPYFDIVHFDQAAAIFNKYPLSFVNCVNSIGNGLVIEDEQVLIKPKNGFGGIGGDYIKPTALANVHAFYKRLKPSIHIIGTGGVKTGRDAFEHILCGASMVQIGTALHQEGPAIFERVTKELKTIMVEKGYQSLNDFRGNLRYKD.

Residues K45, 69–73 (NSMGL), and N128 each bind substrate. Residue 45 to 46 (KT) coordinates FMN. Residue N128 participates in FMN binding. C131 functions as the Nucleophile in the catalytic mechanism. FMN contacts are provided by K165 and V193. Position 194 to 195 (194 to 195 (NS)) interacts with substrate. FMN-binding positions include G220, 248-249 (GG), and 270-271 (GT).

The protein belongs to the dihydroorotate dehydrogenase family. Type 1 subfamily. In terms of assembly, homodimer. Requires FMN as cofactor.

The protein resides in the cytoplasm. The enzyme catalyses (S)-dihydroorotate + fumarate = orotate + succinate. Its pathway is pyrimidine metabolism; UMP biosynthesis via de novo pathway. Its function is as follows. Catalyzes the conversion of dihydroorotate to orotate with fumarate as the electron acceptor. The polypeptide is Putative dihydroorotate dehydrogenase A (fumarate) (pyrD) (Streptococcus pyogenes serotype M5 (strain Manfredo)).